Consider the following 840-residue polypeptide: UPF0508 protein SCY_2952 (840 aa).

Belongs to the UPF0508 family.

The chain is UPF0508 protein SCY_2952 from Saccharomyces cerevisiae (strain YJM789) (Baker's yeast).